The primary structure comprises 425 residues: Dipeptidase tcpJ (425 aa).

Zn(2+) is bound by residues His46, Asp48, and Glu158. The substrate site is built by His185, Arg259, and Asp318.

It belongs to the metallo-dependent hydrolases superfamily. Peptidase M19 family. The cofactor is Zn(2+).

It catalyses the reaction an L-aminoacyl-L-amino acid + H2O = 2 an L-alpha-amino acid. Dipeptidase; part of the gene cluster that mediates the biosynthesis of an unusual class of epipolythiodioxopiperazines (ETPs) lacking the reactive thiol group important for toxicity. Firstly, L-tyrosine is prenylated by tcpD, before undergoing condensation with L-glycine in a reaction catalyzed by the NRPS tcpP leading to the diketopiperazine (DKP) backbone. Afterwards the alpha-carbon of tyrosine is oxidized by the cytochrome P450 tcpC to form a hydroxyl group. However, in contrast other ETP biosynthesis pathways studied so far, tcpC is not able to bishydroxylate the DKP at both alpha-carbon positions, but hydroxylates the alpha-carbon of the tyrosine part and the nitrogen of the glycine part. The next steps involve an alpha,beta-elimination reaction catalyzed by tcpI, a methylation by the methyltransferase tcpN the action of the four enzyme cascade tcpG/K/J/I. Due to a dysfunctional cytochrome P450 monooxygenase tcpC, the pathway leads to the biosynthesis of probable non-toxic metabolites lacking the reactive thiol group. The polypeptide is Dipeptidase tcpJ (Claviceps purpurea (strain 20.1) (Ergot fungus)).